We begin with the raw amino-acid sequence, 247 residues long: 2,3-bisphosphoglycerate-dependent phosphoglycerate mutase (247 aa).

Substrate is bound by residues 8–15 (RHGESTWN), 21–22 (TG), Arg60, 87–90 (ERHY), Lys98, 114–115 (RR), and 183–184 (GN). His9 (tele-phosphohistidine intermediate) is an active-site residue. Glu87 functions as the Proton donor/acceptor in the catalytic mechanism.

It belongs to the phosphoglycerate mutase family. BPG-dependent PGAM subfamily. As to quaternary structure, homodimer.

The enzyme catalyses (2R)-2-phosphoglycerate = (2R)-3-phosphoglycerate. The protein operates within carbohydrate degradation; glycolysis; pyruvate from D-glyceraldehyde 3-phosphate: step 3/5. Functionally, catalyzes the interconversion of 2-phosphoglycerate and 3-phosphoglycerate. The protein is 2,3-bisphosphoglycerate-dependent phosphoglycerate mutase of Leptothrix cholodnii (strain ATCC 51168 / LMG 8142 / SP-6) (Leptothrix discophora (strain SP-6)).